We begin with the raw amino-acid sequence, 448 residues long: Microtubule-associated protein tau (448 aa).

The span at 1–16 (MAEPRQEFDVMEDHAQ) shows a compositional bias: basic and acidic residues. Residues 1–264 (MAEPRQEFDV…GPMPDLKNVK (264 aa)) form a disordered region. At Ala2 the chain carries N-acetylalanine. Position 19 is a phosphotyrosine (Tyr19). Lys33 participates in a covalent cross-link: Glycyl lysine isopeptide (Lys-Gly) (interchain with G-Cter in ubiquitin). A phosphoserine mark is found at Ser35 and Ser50. The span at 50–60 (SETSDAKSTPT) shows a compositional bias: polar residues. Residues Thr58 and Thr60 each carry the phosphothreonine modification. Residues 71–89 (EGAPGEQAAAQAPAEIPEG) show a composition bias toward low complexity. Thr100 bears the Phosphothreonine mark. Basic and acidic residues predominate over residues 119–135 (KGKDGTGPDDKKTKGAD). The residue at position 144 (Thr144) is a Phosphothreonine. Arg146 is subject to Omega-N-methylarginine. Lys154 is subject to N6,N6-dimethyllysine; alternate. Lys154 bears the N6-acetyllysine; alternate mark. Phosphothreonine occurs at positions 160, 166, 167, and 172. The segment covering 163 to 176 (PAKTTPTPKTSPAT) has biased composition (low complexity). A compositionally biased stretch (basic and acidic residues) spans 189–200 (KSERGESGKSGD). Phosphoserine is present on residues Ser198 and Ser202. The segment covering 201 to 221 (RSGYSSPGSPGTPGSRSRTPS) has biased composition (low complexity). Tyr204 bears the Phosphotyrosine mark. 3 positions are modified to phosphoserine: Ser205, Ser206, and Ser209. Phosphothreonine is present on residues Thr212 and Thr219. Position 221 is a phosphoserine (Ser221). Residue Thr224 is modified to Phosphothreonine. Lys232 is modified (N6-acetyllysine). Thr238 bears the Phosphothreonine mark. Ser242 and Ser244 each carry phosphoserine. 4 Tau/MAP repeats span residues 251–281 (QAAPGPMPDLKNVKSKIGSTENLKHQPGGGK), 282–312 (VQIINKKLDLSNVQSKCGSKDNIKHVPGGGS), 313–343 (VQIVYKPVDLSKVTSKCGSLGNIHHKPGGGQ), and 344–375 (VEVKSEKLDFKDRVQSKIGSLDNITHVPGGGN). Lys261 participates in a covalent cross-link: Glycyl lysine isopeptide (Lys-Gly) (interchain with G-Cter in ubiquitin). The residue at position 266 (Lys266) is an N6-acetyllysine; alternate. Residue Lys266 is modified to N6-methyllysine; alternate. Lys266 participates in a covalent cross-link: Glycyl lysine isopeptide (Lys-Gly) (interchain with G-Cter in ubiquitin); alternate. At Ser269 the chain carries Phosphoserine. Lys274 participates in a covalent cross-link: Glycyl lysine isopeptide (Lys-Gly) (interchain with G-Cter in ubiquitin). Lys288 carries the post-translational modification N6-acetyllysine; alternate. A Glycyl lysine isopeptide (Lys-Gly) (interchain with G-Cter in ubiquitin); alternate cross-link involves residue Lys288. Ser292 and Ser296 each carry phosphoserine. Lys297 is modified (N6-acetyllysine). A disulfide bridge connects residues Cys298 and Cys329. Ser300 is subject to Phosphoserine. Lys305 is subject to N6-acetyllysine; alternate. A Glycyl lysine isopeptide (Lys-Gly) (interchain with G-Cter in ubiquitin); alternate cross-link involves residue Lys305. Ser312 is subject to Phosphoserine. At Lys318 the chain carries N6,N6-dimethyllysine; alternate. N6-acetyllysine; alternate is present on residues Lys318, Lys324, and Lys328. Residues Lys318, Lys324, and Lys328 each participate in a glycyl lysine isopeptide (Lys-Gly) (interchain with G-Cter in ubiquitin); alternate cross-link. Ser331 is subject to Phosphoserine. Lys338, Lys350, and Lys354 each carry N6-acetyllysine; alternate. Glycyl lysine isopeptide (Lys-Gly) (interchain with G-Cter in ubiquitin); alternate cross-links involve residues Lys338, Lys350, and Lys354. The residue at position 356 (Arg356) is an Omega-N-methylarginine. Ser359 bears the Phosphoserine mark. Lys360 is covalently cross-linked (Glycyl lysine isopeptide (Lys-Gly) (interchain with G-Cter in ubiquitin)). A Phosphoserine modification is found at Ser363. At Lys376 the chain carries N6-acetyllysine; alternate. Lys376 participates in a covalent cross-link: Glycyl lysine isopeptide (Lys-Gly) (interchain with G-Cter in ubiquitin); alternate. A Glycyl lysine isopeptide (Lys-Gly) (interchain with G-Cter in ubiquitin) cross-link involves residue Lys382. Lys392 is subject to N6-acetyllysine; alternate. A Glycyl lysine isopeptide (Lys-Gly) (interchain with G-Cter in ubiquitin); alternate cross-link involves residue Lys392. Tyr401 carries the phosphotyrosine modification. 2 positions are modified to phosphoserine: Ser403 and Ser407. Residues 405–424 (VVSGDTSPRHLSNVSSTGSI) are disordered. The segment covering 408 to 423 (GDTSPRHLSNVSSTGS) has biased composition (polar residues). Position 410 is a phosphothreonine (Thr410). Ser411, Ser416, Ser423, and Ser429 each carry phosphoserine. Thr434 is subject to Phosphothreonine.

In terms of assembly, interacts with MARK1, MARK2, MARK3 and MARK4. Interacts with SQSTM1 when polyubiquitinated. Interacts with PSMC2 through SQSTM1. Interacts with FKBP4. Binds to CSNK1D. Interacts with SGK1. Interacts with PIN1. Interacts with LRRK2. Interacts with LRP1, leading to endocytosis; this interaction is reduced in the presence of LRPAP1/RAP. Polyubiquitinated. Requires functional TRAF6 and may provoke SQSTM1-dependent degradation by the proteasome. Post-translationally, phosphorylation at various serine and threonine residues in S-P or T-P motifs by proline-directed protein kinases (PDPK1, CDK1, CDK5, GSK3, MAPK) (a few sites per protein in interphase, more in mitosis), and at serine residues in K-X-G-S motifs by MAP/microtubule affinity-regulating kinase (MARK1, MARK2, MARK3, MARK4), causing detachment from microtubules, and their disassembly. Phosphorylation at Ser-269 by BRSK1 and BRSK2 in neurons affects ability to bind microtubules and plays a role in neuron polarization. Phosphorylated by PHK. Dephosphorylation at several serine and threonine residues by the serine/threonine phosphatase PPP5C. In terms of processing, O-glycosylated; contains at least 4 GlcNAc. Site-specific or stoichiometric changes in glycosylation may modulate tau function and also play a role in PHF's formation. Expressed in neurons.

Its subcellular location is the cytoplasm. The protein resides in the cytosol. The protein localises to the cell membrane. It is found in the cytoskeleton. It localises to the cell projection. Its subcellular location is the axon. The protein resides in the dendrite. The protein localises to the secreted. Its function is as follows. Promotes microtubule assembly and stability, and might be involved in the establishment and maintenance of neuronal polarity. The C-terminus binds axonal microtubules while the N-terminus binds neural plasma membrane components, suggesting that tau functions as a linker protein between both. Axonal polarity is predetermined by tau localization (in the neuronal cell) in the domain of the cell body defined by the centrosome. The short isoforms allow plasticity of the cytoskeleton whereas the longer isoforms may preferentially play a role in its stabilization. The protein is Microtubule-associated protein tau (MAPT) of Bos taurus (Bovine).